The chain runs to 463 residues: Serine/threonine-protein kinase sgk-1 (463 aa).

Residues 135–392 form the Protein kinase domain; that stretch reads FDYLTTIGKG…FRDIRDHPFF (258 aa). ATP contacts are provided by residues 141-149 and K164; that span reads IGKGSFGRV. The active-site Proton acceptor is D259. Positions 393–463 constitute an AGC-kinase C-terminal domain; the sequence is LPVDWDKLLN…TFVDTNRVLV (71 aa).

The protein belongs to the protein kinase superfamily. AGC Ser/Thr protein kinase family. Interacts with pdk-1, akt-1, akt-2 and daf-16. Part of a complex containing sgk-1, akt-1 and akt-2. Interacts with let-92 phosphatase regulatory subunit pptr-1. It depends on Mg(2+) as a cofactor. In terms of tissue distribution, expressed in late embryos just before hatching. At postembryonic stages, expressed in sensory and motor neurons and in the intestine. Highly expressed in the intestine and head and tail neurons.

It localises to the cytoplasm. Its subcellular location is the nucleus. It is found in the apical cell membrane. The enzyme catalyses L-seryl-[protein] + ATP = O-phospho-L-seryl-[protein] + ADP + H(+). It catalyses the reaction L-threonyl-[protein] + ATP = O-phospho-L-threonyl-[protein] + ADP + H(+). Its activity is regulated as follows. Phosphorylated and activated by pdk-1. In terms of biological role, acts downstream of PI3 kinase age-1 and kinase pdk-1 in the daf-2/insulin receptor-like transduction pathway. Essential role in regulating development, stress response, and longevity. Phosphorylates Forkhead-related daf-16 and the longevity-promoting skn-1 transcription factors, which inhibits their entry into the nucleus and antagonizes their function. Promotes the cytoplasmic localization of the transcription factor pqm-1. Plays a role in the intracellular trafficking of proteins such as mig-14 to the cell membrane, and this may be through positively regulating ceramide synthesis. Acts downstream of rict-1 to regulate fat storage, size, development and vitellogenesis. Downstream of age-1 and together with akt-1/2, promotes cell survival during embryonic development. Plays a role in maintaining the gonadal basement membrane through antagonizing akt-1 activity. Does not appear to play a role in immune function. The sequence is that of Serine/threonine-protein kinase sgk-1 from Caenorhabditis elegans.